The primary structure comprises 475 residues: Adenylyl cyclase-associated protein 1 (475 aa).

N-acetylalanine is present on A2. At Y31 the chain carries Phosphotyrosine. A Phosphoserine modification is found at S34. K81 carries the N6-acetyllysine modification. Disordered stretches follow at residues 216–255 (ELSG…ASRS) and 278–318 (MKTH…TKKE). A compositionally biased stretch (low complexity) spans 218 to 228 (SGLPSGPSAGS). The segment covering 229-242 (GPPPPPPGPPPPPV) has biased composition (pro residues). The span at 243–255 (STSSGSDESASRS) shows a compositional bias: low complexity. Position 287 is an N6-methyllysine (K287). Residues S290, S295, and S301 each carry the phosphoserine modification. The span at 300–312 (FSAPKPQTSPSPK) shows a compositional bias: pro residues. Phosphothreonine is present on T307. S308 and S310 each carry phosphoserine. One can recognise a C-CAP/cofactor C-like domain in the interval 313–453 (PATKKEPAVL…EGGDFNEFPV (141 aa)). Residue K348 forms a Glycyl lysine isopeptide (Lys-Gly) (interchain with G-Cter in SUMO1) linkage.

Belongs to the CAP family. In terms of assembly, homodimer. Binds actin monomers.

Its subcellular location is the cell membrane. In terms of biological role, directly regulates filament dynamics and has been implicated in a number of complex developmental and morphological processes, including mRNA localization and the establishment of cell polarity. The protein is Adenylyl cyclase-associated protein 1 (CAP1) of Macaca fascicularis (Crab-eating macaque).